A 717-amino-acid chain; its full sequence is Methylcrotonoyl-CoA carboxylase subunit alpha, mitochondrial (717 aa).

A mitochondrion-targeting transit peptide spans 1 to 38 (MAAAALLAAVDRNQLRRVPILLLQPREWAWKLRTMKYG). Residues 45-490 (ITKVLIANRG…HTDFIPQHHK (446 aa)) form the Biotin carboxylation domain. Lys-159 lines the ATP pocket. Residues 163–360 (KSIMAAAGVP…LVEWQLRIAA (198 aa)) enclose the ATP-grasp domain. Residues Lys-180 and Lys-193 each carry the N6-acetyllysine modification. Residues Lys-201 and 207–208 (GG) contribute to the ATP site. Residue Lys-233 is modified to N6-acetyllysine. His-251, His-278, and Glu-318 together coordinate ATP. Residue Arg-335 is part of the active site. Lys-490 is subject to N6-acetyllysine. Lys-577 carries the N6-acetyllysine; alternate modification. Lys-577 is subject to N6-succinyllysine; alternate. In terms of domain architecture, Biotinyl-binding spans 622–711 (SIEVGIPVPK…NRHAPLVEFE (90 aa)). Lys-677 is subject to N6-biotinyllysine.

Probably a dodecamer composed of six biotin-containing alpha subunits (MCCC1) and six beta (MCCC2) subunits. Interacts (via the biotin carboxylation domain) with SIRT4. Biotin serves as cofactor. Acetylated.

The protein localises to the mitochondrion matrix. The catalysed reaction is 3-methylbut-2-enoyl-CoA + hydrogencarbonate + ATP = 3-methyl-(2E)-glutaconyl-CoA + ADP + phosphate + H(+). It participates in amino-acid degradation; L-leucine degradation; (S)-3-hydroxy-3-methylglutaryl-CoA from 3-isovaleryl-CoA: step 2/3. Its function is as follows. Biotin-attachment subunit of the 3-methylcrotonyl-CoA carboxylase, an enzyme that catalyzes the conversion of 3-methylcrotonyl-CoA to 3-methylglutaconyl-CoA, a critical step for leucine and isovaleric acid catabolism. The sequence is that of Methylcrotonoyl-CoA carboxylase subunit alpha, mitochondrial (Mccc1) from Mus musculus (Mouse).